A 336-amino-acid polypeptide reads, in one-letter code: Cytosolic 5'-nucleotidase 3A (336 aa).

Catalysis depends on D88, which acts as the Nucleophile. 2 residues coordinate Mg(2+): D88 and D90. The active-site Proton donor is the D90. A CMP-binding site is contributed by E135. Residues E135 and S156 each contribute to the N(7)-methyl-GMP site. Residues 203-204 and K252 contribute to the substrate site; that span reads SA. Mg(2+) is bound at residue D277. At S278 the chain carries Phosphoserine.

The protein belongs to the pyrimidine 5'-nucleotidase family. As to quaternary structure, monomer. In terms of tissue distribution, isoforms 1, 3 and 4 are expressed in reticulocytes. Isoform 4 is hardly detectable in bone marrow and fetal liver.

It localises to the cytoplasm. Its subcellular location is the endoplasmic reticulum. The catalysed reaction is N(7)-methyl-GMP + H2O = N(7)-methylguanosine + phosphate. It carries out the reaction CMP + H2O = cytidine + phosphate. The enzyme catalyses a ribonucleoside 5'-phosphate + H2O = a ribonucleoside + phosphate. In terms of biological role, nucleotidase which shows specific activity towards cytidine monophosphate (CMP) and 7-methylguanosine monophosphate (m(7)GMP). CMP seems to be the preferred substrate. The sequence is that of Cytosolic 5'-nucleotidase 3A (NT5C3A) from Homo sapiens (Human).